Here is a 338-residue protein sequence, read N- to C-terminus: MKVFYDKDADLSLIKGKQVTIIGYGSQGHAHALNLKESGVNITVGLRKGGASWSKAENAGLQVKEVAEAVKGADVVMMLLPDEQIAEVYAKEVHANIKQGAALAFAHGFNVHYGQVIPRADLDVIMIAPKAPGHTVRGTYSQGGGVPHLIAVAQDKSGAARDIALSYAAANGGGRAGIIETNFREETETDLFGEQAVLCGGTVDLIKAGFETLVEAGYAPEMAYFECLHELKLIVDLIYEGGIANMNYSISNNAEYGEYVTGPRIVTAETKKAMKAVLTDIQTGEYAKSFILENKAGAPTLQSRRRLTAEHQIEQVGSKLRAMMPWIAKNKLVDQSKN.

The KARI N-terminal Rossmann domain occupies 1-181 (MKVFYDKDAD…GGGRAGIIET (181 aa)). NADP(+) is bound by residues 24 to 27 (YGSQ), Arg-47, and Ser-52. His-107 is an active-site residue. Residue Gly-133 coordinates NADP(+). The region spanning 182–327 (NFREETETDL…SKLRAMMPWI (146 aa)) is the KARI C-terminal knotted domain. Mg(2+) contacts are provided by Asp-190, Glu-194, Glu-226, and Glu-230. Ser-251 contributes to the substrate binding site.

It belongs to the ketol-acid reductoisomerase family. Mg(2+) serves as cofactor.

The catalysed reaction is (2R)-2,3-dihydroxy-3-methylbutanoate + NADP(+) = (2S)-2-acetolactate + NADPH + H(+). The enzyme catalyses (2R,3R)-2,3-dihydroxy-3-methylpentanoate + NADP(+) = (S)-2-ethyl-2-hydroxy-3-oxobutanoate + NADPH + H(+). It participates in amino-acid biosynthesis; L-isoleucine biosynthesis; L-isoleucine from 2-oxobutanoate: step 2/4. Its pathway is amino-acid biosynthesis; L-valine biosynthesis; L-valine from pyruvate: step 2/4. Functionally, involved in the biosynthesis of branched-chain amino acids (BCAA). Catalyzes an alkyl-migration followed by a ketol-acid reduction of (S)-2-acetolactate (S2AL) to yield (R)-2,3-dihydroxy-isovalerate. In the isomerase reaction, S2AL is rearranged via a Mg-dependent methyl migration to produce 3-hydroxy-3-methyl-2-ketobutyrate (HMKB). In the reductase reaction, this 2-ketoacid undergoes a metal-dependent reduction by NADPH to yield (R)-2,3-dihydroxy-isovalerate. The sequence is that of Ketol-acid reductoisomerase (NADP(+)) from Paraburkholderia xenovorans (strain LB400).